We begin with the raw amino-acid sequence, 143 residues long: Flagellar assembly factor FliW (143 aa).

It belongs to the FliW family. In terms of assembly, interacts with translational regulator CsrA and flagellin(s).

The protein resides in the cytoplasm. Its function is as follows. Acts as an anti-CsrA protein, binds CsrA and prevents it from repressing translation of its target genes, one of which is flagellin. Binds to flagellin and participates in the assembly of the flagellum. This Clostridium botulinum (strain Langeland / NCTC 10281 / Type F) protein is Flagellar assembly factor FliW.